A 291-amino-acid chain; its full sequence is 4-hydroxy-tetrahydrodipicolinate synthase (291 aa).

Thr-47 lines the pyruvate pocket. Tyr-134 (proton donor/acceptor) is an active-site residue. Lys-162 acts as the Schiff-base intermediate with substrate in catalysis. Ile-205 contributes to the pyruvate binding site.

The protein belongs to the DapA family. As to quaternary structure, homotetramer; dimer of dimers.

It localises to the cytoplasm. The catalysed reaction is L-aspartate 4-semialdehyde + pyruvate = (2S,4S)-4-hydroxy-2,3,4,5-tetrahydrodipicolinate + H2O + H(+). The protein operates within amino-acid biosynthesis; L-lysine biosynthesis via DAP pathway; (S)-tetrahydrodipicolinate from L-aspartate: step 3/4. Its function is as follows. Catalyzes the condensation of (S)-aspartate-beta-semialdehyde [(S)-ASA] and pyruvate to 4-hydroxy-tetrahydrodipicolinate (HTPA). The sequence is that of 4-hydroxy-tetrahydrodipicolinate synthase from Methanoculleus marisnigri (strain ATCC 35101 / DSM 1498 / JR1).